A 462-amino-acid chain; its full sequence is MAYKLSLSAVEPLLIFPAAPFSTKKEKSTFQNNLISSDVFSSALKPLSPLKSLVADFSTHSNPSKDNQLISPPKINHREFLNEEKESDTQTRYLKQLINICNSPSKNHETSLSPSKSTIDNNERKLDNEIDNYKHDVKYSPYKGQGKTSNPSQGTTKCPGIFEEDNFFSVSPKRRKNLFEKYGKTDLGKPARVPSPKKSLSSTIKSPPSRVKLPTSILSKSPPLKVPNKNRSSTFSPLRTPTSSSKTFVIVDHSTPSPPSIRTKLEAFAPNSTFATQKRLRRLATLESSPALRSTLKSLQSKSSPVKLLKLKEEKAKIKNQLFKSEEEKDPVGKQKLPLESSLSPLDHSSAEKEMQKAPAKNKRRRTGSLETGLYPKESPTPSKKRSKRVLWSLKHIVSPGNREKHSLNSTPESIMKKDTKWPQNLAKNNINSEPNTPTKSNIDTGKAHSARAHKTRKNIQS.

Residues 104-120 (PSKNHETSLSPSKSTID) show a composition bias toward polar residues. 3 disordered regions span residues 104-161 (PSKN…CPGI), 180-240 (EKYG…PLRT), and 320-462 (NQLF…NIQS). Basic and acidic residues predominate over residues 121–138 (NNERKLDNEIDNYKHDVK). The span at 146–156 (GKTSNPSQGTT) shows a compositional bias: polar residues. The span at 180–189 (EKYGKTDLGK) shows a compositional bias: basic and acidic residues. The span at 229-240 (KNRSSTFSPLRT) shows a compositional bias: polar residues. Residues 324-333 (KSEEEKDPVG) show a composition bias toward basic and acidic residues. Polar residues predominate over residues 422–444 (WPQNLAKNNINSEPNTPTKSNID). Basic residues predominate over residues 449–462 (HSARAHKTRKNIQS).

In terms of assembly, interacts with dlc1. The dlc1-nsk1 complex seems to oligomerize in chain-like structures. Also binds directly to spindle microtubules. In terms of processing, phosphorylated by cdk1 at prometaphase arrest. Phosphorylation prevents nsk1 kinetochore and spindle targeting. Dephosphorylated by clp1 at anaphase onset controls its relocalization.

The protein resides in the nucleus. Its subcellular location is the nucleolus. It localises to the cytoplasm. It is found in the cytoskeleton. The protein localises to the spindle. The protein resides in the chromosome. Its subcellular location is the centromere. It localises to the kinetochore. Ensures chromosome alignment and accurate chromosome segregation during mitosis. Promotes proper kinetochore-microtubule (k-MT) interactions during anaphase B. The phosphorylation status of nsk1 affects the proper k-MT coupling, ensuring that it interacts stably only at the correct time during mitosis. The chain is Kinetochore protein nsk1 (nsk1) from Schizosaccharomyces pombe (strain 972 / ATCC 24843) (Fission yeast).